We begin with the raw amino-acid sequence, 262 residues long: Steroid 5-alpha-reductase DET2 (262 aa).

6 consecutive transmembrane segments (helical) span residues 13-33 (CLLT…FLQA), 51-71 (IAWF…FPFG), 79-99 (SLLL…IYPL), 113-133 (FPIT…YIQA), 148-168 (WFWW…YINI), and 205-225 (AIEW…GFFL).

The protein belongs to the steroid 5-alpha reductase family.

The protein localises to the membrane. It catalyses the reaction a 3-oxo-5alpha-steroid + NADP(+) = a 3-oxo-Delta(4)-steroid + NADPH + H(+). It carries out the reaction 5alpha-campestan-3-one + NADP(+) = campest-4-en-3-one + NADPH + H(+). The catalysed reaction is (22S,24R)-22-hydroxy-5alpha-ergostan-3-one + NADP(+) = (22S)-22-hydroxycampest-4-en-3-one + NADPH + H(+). The enzyme catalyses 3-dehydro-6-deoxoteasterone + NADP(+) = (22R,23R)-22,23-dihydroxycampest-4-en-3-one + NADPH + H(+). Its pathway is plant hormone biosynthesis; brassinosteroid biosynthesis. Its activity is regulated as follows. Inhibited by the 4-azasteroids 4-MA. Its function is as follows. Involved in a reduction step in the biosynthesis of the plant steroid, brassinolide (BL); acts at the second step in brassinolide biosynthesis in the 5alpha-reduction of (24R)- 24-methylcholest-4-en-3-one, which is further modified to form campestanol. Can use progesterone, testosterone, androstenedione and campestenone as substrate. Also catalyzes the conversion of campest-4-en-3-one (campesta-4-en-3-one, 4-en-3-one) to campest-3-one (campesta-3-one, 3-one), of (22S,24R)-22-hydroxyergost-4-en-3-one (22-hydroxy-campesta-4-en-3-one, 22-OH-4-en-3-one) to (22S,24R)-22-hydroxy-5alpha-ergostan-3-one (22-hydroxy-campesta-3-one, 22-OH-3-one), and of (22R,23R)-22,23-dihydroxy-5alpha-campestan-3-one (22,23,diOH-4-en-3-one) to (22R,23R)-22,23-dihydroxycampest-4-en-3-one (6-deoxo3DT). Required for the brassinosteroid- (BR) dependent regulation of seed size and shape as well as embryo development. The sequence is that of Steroid 5-alpha-reductase DET2 from Arabidopsis thaliana (Mouse-ear cress).